Here is a 100-residue protein sequence, read N- to C-terminus: Small ribosomal subunit protein uS14c (100 aa).

It belongs to the universal ribosomal protein uS14 family. Part of the 30S ribosomal subunit.

The protein localises to the plastid. It is found in the chloroplast. Binds 16S rRNA, required for the assembly of 30S particles. This Physcomitrium patens (Spreading-leaved earth moss) protein is Small ribosomal subunit protein uS14c.